The sequence spans 423 residues: UDP-N-acetylglucosamine 1-carboxyvinyltransferase 1 (423 aa).

24–25 (KN) is a binding site for phosphoenolpyruvate. UDP-N-acetyl-alpha-D-glucosamine is bound at residue Arg-94. The active-site Proton donor is Cys-118. At Cys-118 the chain carries 2-(S-cysteinyl)pyruvic acid O-phosphothioketal. UDP-N-acetyl-alpha-D-glucosamine-binding positions include 123 to 127 (RPIDQ), Asp-309, and Ile-331.

It belongs to the EPSP synthase family. MurA subfamily.

It localises to the cytoplasm. It carries out the reaction phosphoenolpyruvate + UDP-N-acetyl-alpha-D-glucosamine = UDP-N-acetyl-3-O-(1-carboxyvinyl)-alpha-D-glucosamine + phosphate. It participates in cell wall biogenesis; peptidoglycan biosynthesis. Cell wall formation. Adds enolpyruvyl to UDP-N-acetylglucosamine. This Staphylococcus haemolyticus (strain JCSC1435) protein is UDP-N-acetylglucosamine 1-carboxyvinyltransferase 1.